A 105-amino-acid polypeptide reads, in one-letter code: Putative regulatory protein COPRO5265_1186 (105 aa).

The interval 76 to 105 is disordered; that stretch reads RLEEEEEEEERTEPITEQEAELEEESGEDV. Residues 78-105 show a composition bias toward acidic residues; the sequence is EEEEEEEERTEPITEQEAELEEESGEDV.

The protein belongs to the RemA family.

In Coprothermobacter proteolyticus (strain ATCC 35245 / DSM 5265 / OCM 4 / BT), this protein is Putative regulatory protein COPRO5265_1186.